The sequence spans 350 residues: Biotin synthase (350 aa).

In terms of domain architecture, Radical SAM core spans 41 to 268 (NEVQISRLLS…LSRVRLSAGR (228 aa)). [4Fe-4S] cluster is bound by residues C56, C60, and C63. Positions 100, 131, 191, and 263 each coordinate [2Fe-2S] cluster.

This sequence belongs to the radical SAM superfamily. Biotin synthase family. Homodimer. Requires [4Fe-4S] cluster as cofactor. The cofactor is [2Fe-2S] cluster.

It catalyses the reaction (4R,5S)-dethiobiotin + (sulfur carrier)-SH + 2 reduced [2Fe-2S]-[ferredoxin] + 2 S-adenosyl-L-methionine = (sulfur carrier)-H + biotin + 2 5'-deoxyadenosine + 2 L-methionine + 2 oxidized [2Fe-2S]-[ferredoxin]. The protein operates within cofactor biosynthesis; biotin biosynthesis; biotin from 7,8-diaminononanoate: step 2/2. Its function is as follows. Catalyzes the conversion of dethiobiotin (DTB) to biotin by the insertion of a sulfur atom into dethiobiotin via a radical-based mechanism. The chain is Biotin synthase from Shewanella baltica (strain OS223).